Consider the following 237-residue polypeptide: UDP-2,3-diacylglucosamine hydrolase (237 aa).

Residues aspartate 9, histidine 11, aspartate 42, asparagine 80, and histidine 115 each coordinate Mn(2+). 80–81 (NR) is a binding site for substrate. The substrate site is built by aspartate 123, serine 161, lysine 165, lysine 168, and histidine 196. 2 residues coordinate Mn(2+): histidine 196 and histidine 198.

The protein belongs to the LpxH family. The cofactor is Mn(2+).

Its subcellular location is the cell inner membrane. The protein resides in the cytoplasm. The catalysed reaction is UDP-2-N,3-O-bis[(3R)-3-hydroxytetradecanoyl]-alpha-D-glucosamine + H2O = 2-N,3-O-bis[(3R)-3-hydroxytetradecanoyl]-alpha-D-glucosaminyl 1-phosphate + UMP + 2 H(+). Its pathway is glycolipid biosynthesis; lipid IV(A) biosynthesis; lipid IV(A) from (3R)-3-hydroxytetradecanoyl-[acyl-carrier-protein] and UDP-N-acetyl-alpha-D-glucosamine: step 4/6. Its function is as follows. Hydrolyzes the pyrophosphate bond of UDP-2,3-diacylglucosamine to yield 2,3-diacylglucosamine 1-phosphate (lipid X) and UMP by catalyzing the attack of water at the alpha-P atom. Involved in the biosynthesis of lipid A, a phosphorylated glycolipid that anchors the lipopolysaccharide to the outer membrane of the cell. This chain is UDP-2,3-diacylglucosamine hydrolase, found in Haemophilus influenzae (strain ATCC 51907 / DSM 11121 / KW20 / Rd).